A 252-amino-acid polypeptide reads, in one-letter code: Type II secretion system protein N (252 aa).

Residues 1-4 lie on the Cytoplasmic side of the membrane; the sequence is MKRA. The chain crosses the membrane as a helical span at residues 5 to 25; the sequence is VGYGLLFSTVLMTSVVVHLPA. Over 26–252 the chain is Periplasmic; the sequence is QVALSPLPLP…RYPFNQQGQL (227 aa).

This sequence belongs to the GSP N family.

The protein localises to the cell inner membrane. Involved in a type II secretion system (T2SS, formerly general secretion pathway, GSP) for the export of proteins. Required for secretion of cholera toxin through the outer membrane. The protein is Type II secretion system protein N (epsN) of Vibrio cholerae serotype O1 (strain ATCC 39315 / El Tor Inaba N16961).